The chain runs to 1584 residues: MRGQAAAPGPVWILAPLLLLLLLLGRRARAAAGADAGPGPEPCATLVQGKFFGYFSAAAVFPANASRCSWTLRNPDPRRYTLYMKVAKAPVPCSGPGRVRTYQFDSFLESTRTYLGVESFDEVLRLCDPSAPLAFLQASKQFLQMRRQQPPQHDGLRPRAGPPGPTDDFSVEYLVVGNRNPSRAACQMLCRWLDACLAGSRSSHPCGIMQTPCACLGGEAGGPAAGPLAPRGDVCLRDAVAGGPENCLTSLTQDRGGHGATGGWKLWSLWGECTRDCGGGLQTRTRTCLPAPGVEGGGCEGVLEEGRQCNREACGPAGRTSSRSQSLRSTDARRREELGDELQQFGFPAPQTGDPAAEEWSPWSVCSSTCGEGWQTRTRFCVSSSYSTQCSGPLREQRLCNNSAVCPVHGAWDEWSPWSLCSSTCGRGFRDRTRTCRPPQFGGNPCEGPEKQTKFCNIALCPGRAVDGNWNEWSSWSACSASCSQGRQQRTRECNGPSYGGAECQGHWVETRDCFLQQCPVDGKWQAWASWGSCSVTCGAGSQRRERVCSGPFFGGAACQGPQDEYRQCGTQRCPEPHEICDEDNFGAVIWKETPAGEVAAVRCPRNATGLILRRCELDEEGIAYWEPPTYIRCVSIDYRNIQMMTREHLAKAQRGLPGEGVSEVIQTLVEISQDGTSYSGDLLSTIDVLRNMTEIFRRAYYSPTPGDVQNFVQILSNLLAEENRDKWEEAQLAGPNAKELFRLVEDFVDVIGFRMKDLRDAYQVTDNLVLSIHKLPASGATDISFPMKGWRATGDWAKVPEDRVTVSKSVFSTGLTEADEASVFVVGTVLYRNLGSFLALQRNTTVLNSKVISVTVKPPPRSLRTPLEIEFAHMYNGTTNQTCILWDETDVPSSSAPPQLGPWSWRGCRTVPLDALRTRCLCDRLSTFAILAQLSADANMEKATLPSVTLIVGCGVSSLTLLMLVIIYVSVWRYIRSERSVILINFCLSIISSNALILIGQTQTRNKVVCTLVAAFLHFFFLSSFCWVLTEAWQSYMAVTGHLRNRLIRKRFLCLGWGLPALVVAISVGFTKAKGYSTMNYCWLSLEGGLLYAFVGPAAAVVLVNMVIGILVFNKLVSKDGITDKKLKERAGASLWSSCVVLPLLALTWMSAVLAVTDRRSALFQILFAVFDSLEGFVIVMVHCILRREVQDAVKCRVVDRQEEGNGDSGGSFQNGHAQLMTDFEKDVDLACRSVLNKDIAACRTATITGTLKRPSLPEEEKLKLAHAKGPPTNFNSLPANVSKLHLHGSPRYPGGPLPDFPNHSLTLKRDKAPKSSFVGDGDIFKKLDSELSRAQEKALDTSYVILPTATATLRPKPKEEPKYSIHIDQMPQTRLIHLSTAPEASLPARSPPSRQPPSGGPPEAPPAQPPPPPPPPPPPPQQPLPPPPNLEPAPPSLGDPGEPAAHPGPSTGPSTKNENVATLSVSSLERRKSRYAELDFEKIMHTRKRHQDMFQDLNRKLQHAAEKDKEVLGPDSKPEKQQTPNKRPWESLRKAHGTPTWVKKELEPLQPSPLELRSVEWERSGATIPLVGQDIIDLQTEV.

An N-terminal signal peptide occupies residues 1-30; that stretch reads MRGQAAAPGPVWILAPLLLLLLLLGRRARA. Residues 31 to 948 are Extracellular-facing; it reads AAGADAGPGP…ANMEKATLPS (918 aa). N-linked (GlcNAc...) asparagine glycosylation is present at Asn-64. The tract at residues 146-167 is disordered; the sequence is RRQQPPQHDGLRPRAGPPGPTD. A TSP type-1 1 domain is found at 261–315; the sequence is TGGWKLWSLWGECTRDCGGGLQTRTRTCLPAPGVEGGGCEGVLEEGRQCNREACG. Cystine bridges form between Cys-273–Cys-309, Cys-277–Cys-314, and Cys-288–Cys-299. Residues 313–335 form a disordered region; that stretch reads ACGPAGRTSSRSQSLRSTDARRR. Residues 319 to 329 are compositionally biased toward low complexity; it reads RTSSRSQSLRS. TSP type-1 domains are found at residues 354 to 407, 409 to 462, 467 to 520, and 522 to 575; these read DPAA…AVCP, HGAW…ALCP, DGNW…QQCP, and DGKW…QRCP. Cystine bridges form between Cys-366-Cys-400, Cys-370-Cys-406, Cys-381-Cys-390, Cys-421-Cys-456, Cys-425-Cys-461, Cys-436-Cys-446, Cys-479-Cys-514, Cys-483-Cys-519, Cys-494-Cys-504, Cys-534-Cys-569, Cys-538-Cys-574, Cys-549-Cys-559, Cys-581-Cys-616, and Cys-604-Cys-634. Asn-401 carries an N-linked (GlcNAc...) asparagine glycan. Residue Asn-607 is glycosylated (N-linked (GlcNAc...) asparagine). Residue Thr-609 is modified to Phosphothreonine. Asn-692, Asn-844, Asn-877, and Asn-881 each carry an N-linked (GlcNAc...) asparagine glycan. The 180-residue stretch at 760–939 folds into the GAIN-B domain; sequence RDAYQVTDNL…AILAQLSADA (180 aa). 2 disulfide bridges follow: Cys-884-Cys-921 and Cys-909-Cys-923. The GPS stretch occupies residues 884–939; the sequence is CILWDETDVPSSSAPPQLGPWSWRGCRTVPLDALRTRCLCDRLSTFAILAQLSADA. The segment at 927–943 is N-terminal stalk following vasculostatin-120 cleavage which is not required for signaling activity; that stretch reads STFAILAQLSADANMEK. The chain crosses the membrane as a helical span at residues 949–969; that stretch reads VTLIVGCGVSSLTLLMLVIIY. At 970 to 980 the chain is on the cytoplasmic side; the sequence is VSVWRYIRSER. Residues 981 to 1001 traverse the membrane as a helical segment; the sequence is SVILINFCLSIISSNALILIG. The Extracellular segment spans residues 1002-1008; it reads QTQTRNK. Residues 1009–1029 traverse the membrane as a helical segment; the sequence is VVCTLVAAFLHFFFLSSFCWV. Residues 1030–1052 are Cytoplasmic-facing; it reads LTEAWQSYMAVTGHLRNRLIRKR. A helical transmembrane segment spans residues 1053–1073; that stretch reads FLCLGWGLPALVVAISVGFTK. The Extracellular portion of the chain corresponds to 1074-1093; it reads AKGYSTMNYCWLSLEGGLLY. Residues 1094–1114 form a helical membrane-spanning segment; that stretch reads AFVGPAAAVVLVNMVIGILVF. Residues 1115 to 1136 lie on the Cytoplasmic side of the membrane; sequence NKLVSKDGITDKKLKERAGASL. Residues 1137–1157 traverse the membrane as a helical segment; it reads WSSCVVLPLLALTWMSAVLAV. Residues 1158–1166 are Extracellular-facing; that stretch reads TDRRSALFQ. A helical transmembrane segment spans residues 1167-1187; it reads ILFAVFDSLEGFVIVMVHCIL. Topologically, residues 1188 to 1584 are cytoplasmic; the sequence is RREVQDAVKC…QDIIDLQTEV (397 aa). Residues 1365–1584 form an involved in interaction with MAGI1 region; that stretch reads YSIHIDQMPQ…QDIIDLQTEV (220 aa). Disordered stretches follow at residues 1385-1475 and 1501-1548; these read EASL…RRKS and RKLQ…KKEL. The span at 1391–1439 shows a compositional bias: pro residues; sequence RSPPSRQPPSGGPPEAPPAQPPPPPPPPPPPPQQPLPPPPNLEPAPPSL. The span at 1453 to 1469 shows a compositional bias: polar residues; the sequence is TGPSTKNENVATLSVSS. Ser-1469 is modified (phosphoserine). A compositionally biased stretch (basic and acidic residues) spans 1501 to 1522; it reads RKLQHAAEKDKEVLGPDSKPEK. The tract at residues 1581 to 1584 is indispensable for interaction with MAGI1; it reads QTEV.

This sequence belongs to the G-protein coupled receptor 2 family. LN-TM7 subfamily. Interacts with ELMO1 and DOCK. When bound to ELMO1 and DOCK1, acts as a module to promote apoptotic cell engulfment. Interacts with MDM2; the interaction results in inhibition of MDM2-mediated ubiquitination and degradation of DLG4/PSD95. Interacts with PARD3 and TIAM1; the interaction is required for correct dendritic. localization of PARD3 and TIAM1 and for dendritic spine formation. Interacts with MAGI1. Interacts with MAGI3. Interacts with BAIAP2. Interacts with PHYHIP. Interacts with DLG4 (via PDZ domain). Vasculostatin-120: Interacts with CD36. Vasculostatin-120: Interacts with ARRB2. Interacts with BAIAP3; this interaction is direct. In terms of processing, proteolytically cleaved to produce vasculostatin-40 and vasculostatin-120. Vasculostatin-40 is the major form and is produced through proteolytic cleavage by MMP14 between residues 321 and 329 with cleavage likely to be between Ser-326 and Leu-327. Ubiquitinated. Expressed in brain (at protein level). Expressed on mononuclear phagocytes and monocyte-derived macrophages in the gastric mucosa (at protein level). Expressed in normal pancreatic tissue but not in pancreatic tumor tissue. Reduced or no expression is observed in some glioblastomas.

It is found in the cell membrane. Its subcellular location is the cell projection. It localises to the phagocytic cup. The protein resides in the cell junction. The protein localises to the focal adhesion. It is found in the dendritic spine. Its subcellular location is the postsynaptic density. It localises to the secreted. In terms of biological role, phosphatidylserine receptor which enhances the engulfment of apoptotic cells. Also mediates the binding and engulfment of Gram-negative bacteria. Stimulates production of reactive oxygen species by macrophages in response to Gram-negative bacteria, resulting in enhanced microbicidal macrophage activity. In the gastric mucosa, required for recognition and engulfment of apoptotic gastric epithelial cells. Promotes myoblast fusion. Activates the Rho pathway in a G-protein-dependent manner. Inhibits MDM2-mediated ubiquitination and degradation of DLG4/PSD95, promoting DLG4 stability and regulating synaptic plasticity. Required for the formation of dendritic spines by ensuring the correct localization of PARD3 and TIAM1. Potent inhibitor of angiogenesis in brain and may play a significant role as a mediator of the p53/TP53 signal in suppression of glioblastoma. Its function is as follows. Inhibits angiogenesis in a CD36-dependent manner. Inhibits angiogenesis. The protein is Adhesion G protein-coupled receptor B1 of Homo sapiens (Human).